We begin with the raw amino-acid sequence, 67 residues long: Protein AaeX (67 aa).

The next 2 helical transmembrane spans lie at 3 to 23 (LFPV…ELLL) and 47 to 67 (PALF…RLFV).

Belongs to the AaeX family.

Its subcellular location is the cell membrane. In Escherichia coli O157:H7, this protein is Protein AaeX.